Here is a 392-residue protein sequence, read N- to C-terminus: Stilbene synthase 4 (392 aa).

55–58 serves as a coordination point for substrate; sequence KFNR. The active site involves Cys-164. Substrate is bound by residues Leu-267 and 305–307; that span reads GGP.

This sequence belongs to the thiolase-like superfamily. Chalcone/stilbene synthases family. As to quaternary structure, homodimer.

It localises to the cytoplasm. The enzyme catalyses 4-coumaroyl-CoA + 3 malonyl-CoA + 3 H(+) = trans-resveratrol + 4 CO2 + 4 CoA. The protein operates within phytoalexin biosynthesis; 3,4',5-trihydroxystilbene biosynthesis; 3,4',5-trihydroxystilbene from trans-4-coumarate: step 2/2. Its function is as follows. Mediates resistance to pathogens which are sensitive to stilbenes. The protein is Stilbene synthase 4 of Vitis vinifera (Grape).